A 257-amino-acid polypeptide reads, in one-letter code: Glucose-1-phosphate cytidylyltransferase (257 aa).

Substrate-binding positions include 6–10 (LAGGL), 11–13 (GTR), Lys23, Ser104, Arg109, and Gly128. The Mg(2+) site is built by Asp129 and Asp234.

Belongs to the glucose-1-phosphate cytidylyltransferase family. As to quaternary structure, homohexamer. Requires Mg(2+) as cofactor.

The enzyme catalyses alpha-D-glucose 1-phosphate + CTP + H(+) = CDP-D-glucose + diphosphate. It participates in nucleotide-sugar biosynthesis; CDP-3,6-dideoxy-D-mannose biosynthesis; CDP-3,6-dideoxy-D-mannose from CTP and alpha-D-glucose 1-phosphate: step 1/5. Its pathway is bacterial outer membrane biogenesis; LPS O-antigen biosynthesis. In terms of biological role, involved in the biosynthesis of the tyvelose, a 3,6-dideoxyhexose found in the O-antigen of the surface lipopolysaccharides. It catalyzes the transfer of a CMP moiety from CTP to glucose 1-phosphate. The chain is Glucose-1-phosphate cytidylyltransferase (rfbF) from Salmonella typhimurium (strain LT2 / SGSC1412 / ATCC 700720).